Consider the following 291-residue polypeptide: 33 kDa chaperonin (291 aa).

Cystine bridges form between cysteine 229–cysteine 231 and cysteine 262–cysteine 265.

This sequence belongs to the HSP33 family. In terms of processing, under oxidizing conditions two disulfide bonds are formed involving the reactive cysteines. Under reducing conditions zinc is bound to the reactive cysteines and the protein is inactive.

It is found in the cytoplasm. Functionally, redox regulated molecular chaperone. Protects both thermally unfolding and oxidatively damaged proteins from irreversible aggregation. Plays an important role in the bacterial defense system toward oxidative stress. This Vibrio cholerae serotype O1 (strain ATCC 39315 / El Tor Inaba N16961) protein is 33 kDa chaperonin.